The sequence spans 142 residues: Salivary protein 15a (142 aa).

An N-terminal signal peptide occupies residues 1 to 20; the sequence is MKYLGLALISAVFLIGACQA. 3 disulfides stabilise this stretch: cysteine 27–cysteine 44, cysteine 40–cysteine 108, and cysteine 91–cysteine 117.

The protein belongs to the PBP/GOBP family. Female salivary gland (at protein level).

It is found in the secreted. Inhibits contact coagulation pathway activation in the host by sequestering anionic polymers, such as polyphosphate and dextran sulfate, and thus blocking interaction of protein components of the pathway with negatively charged surfaces. Inhibits dextran sulfate-mediated autoactivation of host coagulation factor XII (F12). Inhibits dextran sulfate-mediated autoactivation of host factor XI (F11). Inhibits polyphosphate-mediated activation of host F11 by thrombin (F2). May inhibit dextran sulfate-mediated bradykinin generation in host plasma. This chain is Salivary protein 15a, found in Phlebotomus duboscqi (Sandfly).